A 585-amino-acid polypeptide reads, in one-letter code: Nitrogen permease regulator 3-like protein (585 aa).

Residues 117-157 form a disordered region; sequence GEWAKRRKPRTTVESNASSSHLVSKPESSHPSTGSFEVKSS. The segment covering 128–138 has biased composition (polar residues); it reads TVESNASSSHL. Positions 148–157 are enriched in low complexity; it reads STGSFEVKSS.

It belongs to the NPR3 family.

The sequence is that of Nitrogen permease regulator 3-like protein from Schizosaccharomyces pombe (strain 972 / ATCC 24843) (Fission yeast).